The sequence spans 449 residues: Monoacylglycerol lipase (449 aa).

Residue Lys-82 forms a Glycyl lysine isopeptide (Lys-Gly) (interchain with G-Cter in ubiquitin) linkage. The AB hydrolase-1 domain occupies 151-392 (PMLIILHGLT…LLLETSTGGH (242 aa)). A GXSXG motif is present at residues 230–234 (GFSLG). Ser-232 serves as the catalytic Nucleophile. Active-site charge relay system residues include Asp-364 and His-392.

Belongs to the AB hydrolase superfamily. AB hydrolase 4 family.

The enzyme catalyses Hydrolyzes glycerol monoesters of long-chain fatty acids.. It catalyses the reaction 1-hexadecanoylglycerol + H2O = glycerol + hexadecanoate + H(+). The catalysed reaction is 1-octadecanoylglycerol + H2O = octadecanoate + glycerol + H(+). It carries out the reaction 1-(9Z-octadecenoyl)-glycerol + H2O = glycerol + (9Z)-octadecenoate + H(+). Functionally, converts monoacylglycerides (MAG) to free fatty acids and glycerol. Has a preference for palmitoyl-MAG. Does not play a significant role in ethyl ester biosynthesis. Also possesses ester hydrolase and low but persistent TAG lipase activity. The chain is Monoacylglycerol lipase from Saccharomyces cerevisiae (strain ATCC 204508 / S288c) (Baker's yeast).